We begin with the raw amino-acid sequence, 605 residues long: Adaptin medium chain homolog APM2 (605 aa).

Residues 150–196 (EEWSPGEESSSSSGSDSDSEYSNTNKRKDKKKKRKKKKGTKGKSVGK) are disordered. Over residues 155-171 (GEESSSSSGSDSDSEYS) the composition is skewed to low complexity. The span at 174–196 (NKRKDKKKKRKKKKGTKGKSVGK) shows a compositional bias: basic residues. One can recognise an MHD domain in the interval 269–604 (KNEFFLDVIE…TVSDEEYAYI (336 aa)).

Belongs to the adaptor complexes medium subunit family. As to quaternary structure, component of the AP-1R complex composed of at least APM2, APL4 and APS1. Interacts with MIL1. Interacts with APL2.

The protein localises to the golgi apparatus membrane. It localises to the early endosome membrane. Its subcellular location is the cytoplasmic vesicle. The protein resides in the clathrin-coated vesicle membrane. In terms of biological role, component of the AP-1-related (AP-1R) complex, an adapter protein complex that mediates of cargo protein sorting in clathrin-coated vesicles. AP-1R has a specific role in SNARE SNC1 sorting. In contrast to the APM1-containing AP-1 complex, AP-1R is incapable of sorting CHS3. This is Adaptin medium chain homolog APM2 (APM2) from Saccharomyces cerevisiae (strain ATCC 204508 / S288c) (Baker's yeast).